Consider the following 450-residue polypeptide: Tubulin alpha chain (450 aa).

Gln11 is a binding site for GTP. At Lys40 the chain carries N6-acetyllysine. 6 residues coordinate GTP: Glu71, Gly144, Thr145, Thr179, Asn206, and Asn228. Glu71 provides a ligand contact to Mg(2+). Residue Glu254 is part of the active site.

Belongs to the tubulin family. In terms of assembly, dimer of alpha and beta chains. A typical microtubule is a hollow water-filled tube with an outer diameter of 25 nm and an inner diameter of 15 nM. Alpha-beta heterodimers associate head-to-tail to form protofilaments running lengthwise along the microtubule wall with the beta-tubulin subunit facing the microtubule plus end conferring a structural polarity. Microtubules usually have 13 protofilaments but different protofilament numbers can be found in some organisms and specialized cells. The cofactor is Mg(2+). Undergoes a tyrosination/detyrosination cycle, the cyclic removal and re-addition of a C-terminal tyrosine residue by the enzymes tubulin tyrosine carboxypeptidase (TTCP) and tubulin tyrosine ligase (TTL), respectively. In terms of processing, acetylation of alpha chains at Lys-40 stabilizes microtubules and affects affinity and processivity of microtubule motors. This modification has a role in multiple cellular functions, ranging from cell motility, cell cycle progression or cell differentiation to intracellular trafficking and signaling.

Its subcellular location is the cytoplasm. The protein resides in the cytoskeleton. The catalysed reaction is GTP + H2O = GDP + phosphate + H(+). Functionally, tubulin is the major constituent of microtubules, a cylinder consisting of laterally associated linear protofilaments composed of alpha- and beta-tubulin heterodimers. Microtubules grow by the addition of GTP-tubulin dimers to the microtubule end, where a stabilizing cap forms. Below the cap, tubulin dimers are in GDP-bound state, owing to GTPase activity of alpha-tubulin. This Prunus dulcis (Almond) protein is Tubulin alpha chain (TUBA).